The primary structure comprises 530 residues: Na(+)/H(+) antiporter NhaB (530 aa).

The next 10 helical transmembrane spans lie at 13–33 (FLGQ…LINP), 67–87 (PGGL…ETVL), 90–110 (VVGN…IYFL), 138–158 (AAAL…VIAV), 205–225 (LLMH…VGEP), 245–265 (MAPI…FLEF), 302–333 (LVIQ…VIIL), 350–370 (FEEA…VAVI), 449–469 (VATP…LAPL), and 477–497 (MVIM…VMTA).

It belongs to the NhaB Na(+)/H(+) (TC 2.A.34) antiporter family.

Its subcellular location is the cell inner membrane. The enzyme catalyses 2 Na(+)(in) + 3 H(+)(out) = 2 Na(+)(out) + 3 H(+)(in). In terms of biological role, na(+)/H(+) antiporter that extrudes sodium in exchange for external protons. This Alcanivorax borkumensis (strain ATCC 700651 / DSM 11573 / NCIMB 13689 / SK2) protein is Na(+)/H(+) antiporter NhaB.